The chain runs to 291 residues: ADP-dependent (S)-NAD(P)H-hydrate dehydratase (291 aa).

A YjeF C-terminal domain is found at 5–273; sequence SKDILEEVIT…QALPTYMKKY (269 aa). Positions 40, 103, and 153 each coordinate (6S)-NADPHX. Residue Gly-215 coordinates AMP. Asp-216 contributes to the (6S)-NADPHX binding site.

Belongs to the NnrD/CARKD family. As to quaternary structure, homotetramer. Mg(2+) is required as a cofactor.

The catalysed reaction is (6S)-NADHX + ADP = AMP + phosphate + NADH + H(+). It catalyses the reaction (6S)-NADPHX + ADP = AMP + phosphate + NADPH + H(+). Its function is as follows. Catalyzes the dehydration of the S-form of NAD(P)HX at the expense of ADP, which is converted to AMP. Together with NAD(P)HX epimerase, which catalyzes the epimerization of the S- and R-forms, the enzyme allows the repair of both epimers of NAD(P)HX, a damaged form of NAD(P)H that is a result of enzymatic or heat-dependent hydration. The protein is ADP-dependent (S)-NAD(P)H-hydrate dehydratase of Enterococcus faecalis (strain ATCC 700802 / V583).